A 580-amino-acid chain; its full sequence is Capsid vertex component 2 (580 aa).

Interaction with major capsid protein/MCP regions lie at residues 1-49 and 1-50; these read MDPY…ETAA and MDPY…TAAE. Positions 108-129 are disordered; it reads AEEADAARGDEPAGGGDGGAPP. The segment covering 119-128 has biased composition (gly residues); sequence PAGGGDGGAP.

This sequence belongs to the herpesviridae CVC2 protein family. In terms of assembly, heterodimerizes with CVC1. Interacts with major capsid protein/MCP and triplex capsid protein 1/TRX1 at the pentamer vertices. Interacts with the large tegument protein/LTP. Interacts with host NUP214; this interaction might be essential to the capsid docking to the host nuclear pore. Interacts with host TMEM250.

It is found in the virion. The protein localises to the host nucleus. Capsid vertex-specific component that plays a role during viral DNA encapsidation, assuring correct genome cleavage and presumably stabilizing capsids that contain full-length viral genomes. Participates in the interaction between the capsid and the tegument through interaction with the large tegument protein/LTP. May mediate the capsid docking to the nuclear pore allowing entry of the viral genome into the host nucleus through binding to host nucleoporins NUP214. This Human herpesvirus 1 (strain 17) (HHV-1) protein is Capsid vertex component 2.